The sequence spans 341 residues: DnaJ homolog subfamily C member 22 (341 aa).

A TM2 domain is found at 4–50 (GLLMTYALWAFGGPVGLHHLYLGRDSHALLWMLTLGGGGLGWLWEFW). 7 consecutive transmembrane segments (helical) span residues 5-25 (LLMTYALWAFGGPVGLHHLYL), 30-50 (HALLWMLTLGGGGLGWLWEFW), 81-101 (FASQMVVGVYFGLVALISLSS), 105-125 (FYIVGLPLAVGLGVLLVAAVG), 135-155 (LGAAFLTSPVFYGRPIAILPI), 185-205 (VGLAYLAFTGPLAYSTLYNTA), and 232-252 (VESVLLLPCRIWWLLVGAPGF). The J domain maps to 277–341 (LAHQVLGIPE…QPKKPRASWR (65 aa)).

It localises to the membrane. In terms of biological role, may function as a co-chaperone. This Rattus norvegicus (Rat) protein is DnaJ homolog subfamily C member 22 (Dnajc22).